The following is a 367-amino-acid chain: DNA replication and repair protein RecF (367 aa).

Residue 30–37 (GANGSGKT) coordinates ATP.

It belongs to the RecF family.

It is found in the cytoplasm. The RecF protein is involved in DNA metabolism; it is required for DNA replication and normal SOS inducibility. RecF binds preferentially to single-stranded, linear DNA. It also seems to bind ATP. The polypeptide is DNA replication and repair protein RecF (Pseudomonas putida (strain ATCC 47054 / DSM 6125 / CFBP 8728 / NCIMB 11950 / KT2440)).